A 274-amino-acid chain; its full sequence is MRMALGVSYNGQAYNGWQSQPSGNTVQDRLEAALGRFATQEVHTICAGRTDAGVHGLMQVVHFDTQLQRAPFSWVRGTNTFLPTDIAVQWAQPVPDAFHSRACAVARRYAYVLLQSPVRPSVDAGRVGWVFHALDEQAMHRAVQHLLGEHDFTSFRASACQAKSPVKTLHRIDITRRAPPAGESTGTHGCIPCYWRFEFEGNAFLHHMIRNIMGCIVAIGQGLYPPEWMRTVLEARSRDAAAPTFSPDGLYFQGPVYGAEWGLPTRTAAYDWLP.

Asp-51 functions as the Nucleophile in the catalytic mechanism. Substrate is bound at residue Tyr-109.

It belongs to the tRNA pseudouridine synthase TruA family. As to quaternary structure, homodimer.

The catalysed reaction is uridine(38/39/40) in tRNA = pseudouridine(38/39/40) in tRNA. Formation of pseudouridine at positions 38, 39 and 40 in the anticodon stem and loop of transfer RNAs. This Acidovorax ebreus (strain TPSY) (Diaphorobacter sp. (strain TPSY)) protein is tRNA pseudouridine synthase A.